The chain runs to 547 residues: Calcium-dependent protein kinase 16 (547 aa).

Residues 1–53 (MGNCCRSPAAAAREDVKTSHFPASTGGGKKKPHQARNGGGGGGGGGGGGWEKK) form a disordered region. Glycine 2 carries N-myristoyl glycine lipidation. Residues 37 to 49 (NGGGGGGGGGGGG) show a composition bias toward gly residues. One can recognise a Protein kinase domain in the interval 73-331 (YALDRELGRG…AKQVLEHTWL (259 aa)). Residues 79 to 87 (LGRGEFGVT) and lysine 102 contribute to the ATP site. Aspartate 197 functions as the Proton acceptor in the catalytic mechanism. The interval 337–367 (APNVPLGDIVKSRLKQFSRMNRFKRRALRVI) is autoinhibitory domain. EF-hand domains follow at residues 374 to 409 (EEVE…FGSH), 410 to 445 (LAES…LQRM), 446 to 481 (ANGE…DGAT), and 482 to 517 (DIME…GTDW). Ca(2+) contacts are provided by aspartate 387, aspartate 389, aspartate 391, glutamate 398, aspartate 423, asparagine 425, glutamate 434, aspartate 459, aspartate 461, asparagine 463, tyrosine 465, glutamate 470, aspartate 495, aspartate 497, aspartate 499, lysine 501, and glutamate 506.

Belongs to the protein kinase superfamily. Ser/Thr protein kinase family. CDPK subfamily.

The protein resides in the membrane. It catalyses the reaction L-seryl-[protein] + ATP = O-phospho-L-seryl-[protein] + ADP + H(+). The catalysed reaction is L-threonyl-[protein] + ATP = O-phospho-L-threonyl-[protein] + ADP + H(+). Its activity is regulated as follows. Activated by calcium. Autophosphorylation may play an important role in the regulation of the kinase activity. Its function is as follows. May play a role in signal transduction pathways that involve calcium as a second messenger. This Oryza sativa subsp. japonica (Rice) protein is Calcium-dependent protein kinase 16.